Reading from the N-terminus, the 143-residue chain is SsrA-binding protein (143 aa).

The protein belongs to the SmpB family.

Its subcellular location is the cytoplasm. Functionally, required for rescue of stalled ribosomes mediated by trans-translation. Binds to transfer-messenger RNA (tmRNA), required for stable association of tmRNA with ribosomes. tmRNA and SmpB together mimic tRNA shape, replacing the anticodon stem-loop with SmpB. tmRNA is encoded by the ssrA gene; the 2 termini fold to resemble tRNA(Ala) and it encodes a 'tag peptide', a short internal open reading frame. During trans-translation Ala-aminoacylated tmRNA acts like a tRNA, entering the A-site of stalled ribosomes, displacing the stalled mRNA. The ribosome then switches to translate the ORF on the tmRNA; the nascent peptide is terminated with the 'tag peptide' encoded by the tmRNA and targeted for degradation. The ribosome is freed to recommence translation, which seems to be the essential function of trans-translation. The sequence is that of SsrA-binding protein from Deinococcus geothermalis (strain DSM 11300 / CIP 105573 / AG-3a).